The primary structure comprises 265 residues: Thiazole synthase (265 aa).

The active-site Schiff-base intermediate with DXP is the Lys-107. 1-deoxy-D-xylulose 5-phosphate is bound by residues Gly-168, 194–195 (AG), and 216–217 (NT).

Belongs to the ThiG family. Homotetramer. Forms heterodimers with either ThiH or ThiS.

The protein localises to the cytoplasm. The catalysed reaction is [ThiS sulfur-carrier protein]-C-terminal-Gly-aminoethanethioate + 2-iminoacetate + 1-deoxy-D-xylulose 5-phosphate = [ThiS sulfur-carrier protein]-C-terminal Gly-Gly + 2-[(2R,5Z)-2-carboxy-4-methylthiazol-5(2H)-ylidene]ethyl phosphate + 2 H2O + H(+). It functions in the pathway cofactor biosynthesis; thiamine diphosphate biosynthesis. In terms of biological role, catalyzes the rearrangement of 1-deoxy-D-xylulose 5-phosphate (DXP) to produce the thiazole phosphate moiety of thiamine. Sulfur is provided by the thiocarboxylate moiety of the carrier protein ThiS. In vitro, sulfur can be provided by H(2)S. This chain is Thiazole synthase, found in Pseudomonas paraeruginosa (strain DSM 24068 / PA7) (Pseudomonas aeruginosa (strain PA7)).